The following is a 369-amino-acid chain: Uroporphyrinogen decarboxylase (369 aa).

Residues 1 to 26 are disordered; the sequence is MPVLHVDARPGSGPGGVSPPPSGAAL. Substrate-binding positions include 56-60, D105, Y180, S235, and H348; that span reads RQAGR.

This sequence belongs to the uroporphyrinogen decarboxylase family. Homodimer.

It is found in the cytoplasm. The enzyme catalyses uroporphyrinogen III + 4 H(+) = coproporphyrinogen III + 4 CO2. It functions in the pathway porphyrin-containing compound metabolism; protoporphyrin-IX biosynthesis; coproporphyrinogen-III from 5-aminolevulinate: step 4/4. Catalyzes the decarboxylation of four acetate groups of uroporphyrinogen-III to yield coproporphyrinogen-III. This Frankia casuarinae (strain DSM 45818 / CECT 9043 / HFP020203 / CcI3) protein is Uroporphyrinogen decarboxylase.